Here is a 315-residue protein sequence, read N- to C-terminus: NAD(P)H-dependent anabolic L-arginine dehydrogenase DauB (315 aa).

This sequence belongs to the ornithine cyclodeaminase/mu-crystallin family.

The enzyme catalyses L-arginine + NAD(+) + H2O = 5-guanidino-2-oxopentanoate + NH4(+) + NADH + H(+). It catalyses the reaction L-arginine + NADP(+) + H2O = 5-guanidino-2-oxopentanoate + NH4(+) + NADPH + H(+). Involved in the anabolism of D-lysine and D-arginine. Under aerobic conditions, the arginine succinyltransferase (AST) and arginine transaminase (ATA) pathways are 2 major routes for L-arginine utilization as the sole source of carbon and nitrogen. The D-to-L racemization of arginine by DauA and DauB is necessary, before to be channeled into the AST and/or ATA pathways. DauB catalyzes the synthesis of L-arginine from 2-ketoarginine (2-KA) and ammonium. This chain is NAD(P)H-dependent anabolic L-arginine dehydrogenase DauB, found in Pseudomonas aeruginosa (strain ATCC 15692 / DSM 22644 / CIP 104116 / JCM 14847 / LMG 12228 / 1C / PRS 101 / PAO1).